The chain runs to 303 residues: Protease HtpX homolog (303 aa).

The next 2 membrane-spanning stretches (helical) occupy residues V4–I24 and M38–L58. H144 is a binding site for Zn(2+). Residue E145 is part of the active site. H148 contacts Zn(2+). The next 2 membrane-spanning stretches (helical) occupy residues G152–S172 and I199–F219. E224 is a Zn(2+) binding site.

This sequence belongs to the peptidase M48B family. Zn(2+) serves as cofactor.

It localises to the cell inner membrane. The sequence is that of Protease HtpX homolog from Chlorobium phaeobacteroides (strain BS1).